The sequence spans 113 residues: Dynein light chain Tctex-type 1 (113 aa).

An N-acetylmethionine modification is found at Met1. Residues 41-113 (QWTTNVLEQT…CIVSTFGLSI (73 aa)) form an interaction with GNB1 region.

The protein belongs to the dynein light chain Tctex-type family. In terms of assembly, homodimer. The cytoplasmic dynein 1 complex consists of two catalytic heavy chains (HCs) and a number of non-catalytic subunits presented by intermediate chains (ICs), light intermediate chains (LICs) and light chains (LCs); the composition seems to vary in respect to the IC, LIC and LC composition. The heavy chain homodimer serves as a scaffold for the probable homodimeric assembly of the respective non-catalytic subunits. The ICs and LICs bind directly to the HC dimer and the LCs assemble on the IC dimer. DYNLT1 and DYNLT3 compete for association with dynein IC (DYNC1I1 or DYNC1I2). Self-associates. Interacts with RHO. Interacts with DYNC1I1 and DYNC1I2. Interacts with DOC2A, DOC2B and SCN10A. Interacts with PVR. Interacts with SVIL isoform 2. Interacts with GNB1; the interaction occurs in presence of guanine nucleotide-binding protein G(T) subunit gamma; the interaction diminishes the association of DYNLT1 with dynein IC (DYNC1I1 or DYNC1I2). Interacts with GNB2, GNB3 and GNB5; the interactions occur in presence of guanine nucleotide-binding protein G(T) subunit gamma. Interacts with ACVR2B and ARHGEF2. Interacts with DNAI4. Interacts with CFAP61. Phosphorylated by BMPR2. The phosphorylation status is proposed to regulate the association with the cytoplasmic dynein complex and may have role in cytoplasmic dynein cargo release. High level in testis (germ cell-specific). Expressed in sperm (at protein level). 200-fold lower in liver, brain, heart, spleen, and kidney. Levels in thymus and two embryonal carcinoma cell lines were several-fold higher than this low constitutive level.

The protein resides in the golgi apparatus. It is found in the cytoplasm. It localises to the cytoskeleton. The protein localises to the spindle. Acts as one of several non-catalytic accessory components of the cytoplasmic dynein 1 complex that are thought to be involved in linking dynein to cargos and to adapter proteins that regulate dynein function. Cytoplasmic dynein 1 acts as a motor for the intracellular retrograde motility of vesicles and organelles along microtubules. Binds to transport cargos and is involved in apical cargo transport such as rhodopsin-bearing vesicles in polarized epithelia. May also be a accessory component of axonemal dynein. Plays an important role in male germ cell development and function. Candidate for involvement in male sterility. Its function is as follows. Plays a role in neuronal morphogenesis; the function is independent of cytoplasmic dynein and seems to be coupled to regulation of the actin cytoskeleton by enhancing Rac1 activity. The function in neurogenesis may be regulated by association with a G-protein beta-gamma dimer. May function as a receptor-independent activator of heterotrimeric G-protein signaling; the activation appears to be independent of a nucleotide exchange. Plays a role in regulating neurogenesis; inhibits the genesis of neurons from precursor cells during cortical development presumably by antagonizing ARHGEF2. Unrelated to the role in retrograde microtubule-associated movement may play a role in the dimerization of cytoplasmic proteins/domains such as for ACVR2B. Binds to the cytoplasmic domain of ACVR2B and, in vitro, inhibits ACVR2B signaling. Involved in the regulation of mitotic spindle orientation. The sequence is that of Dynein light chain Tctex-type 1 (Dynlt1) from Mus musculus (Mouse).